The following is a 253-amino-acid chain: CD151 antigen (253 aa).

Over 1-18 (MGEFNEKKTTCGTVCLKY) the chain is Cytoplasmic. 2 S-palmitoyl cysteine lipidation sites follow: C11 and C15. Residues 19 to 39 (LLFTYNCCFWLAGLAVMAVGI) traverse the membrane as a helical segment. The Extracellular portion of the chain corresponds to 40–57 (WTLALKSDYISLLASGTY). Residues 58–78 (LATAYILVVAGAVVMVTGVLG) form a helical membrane-spanning segment. Residues 79–91 (CCATFKERRNLLR) lie on the Cytoplasmic side of the membrane. Residues 92-112 (LYFILLLIIFLLEIIAGVLAY) traverse the membrane as a helical segment. Residues 113–221 (VYYQQLNTEL…LETFIQEHLR (109 aa)) are Extracellular-facing. N-linked (GlcNAc...) asparagine glycosylation occurs at N159. Residues 222-242 (VIGAVGTGIACVQVFGMIFTC) form a helical membrane-spanning segment. 2 S-palmitoyl cysteine lipidation sites follow: C242 and C243. The Cytoplasmic segment spans residues 243–253 (CLYRSLKLEHY).

This sequence belongs to the tetraspanin (TM4SF) family. Interacts with integrins ITGA3:ITGB1, ITGA5:ITGB1, ITGA3:ITGB1 and ITGA6:ITGB4 and with CD9 and CD181. Interacts (via the second extracellular domain) with integrin ITGAV:ITGB3. Interacts with ITGA3; this interaction modulates ITGA3 glycosylation pattern. Interacts with F11R. Interacts with RAC1 and CDC42; these interactions mediate physical association of RAC1 and CDC42 with integrin adhesion receptor complexes. In terms of processing, palmitoylated. Palmitoylation by ZDHHC2 regulates CD151 expression, association with other tetraspanin family proteins and function in cell adhesion. Ubiquitinated by RNF128 on lysine residues present in the tetraspanin amino terminus via 'Lys-48'-linked ubiquitin leading to proteasomal degradation.

The protein localises to the cell membrane. Structural component of specialized membrane microdomains known as tetraspanin-enriched microdomains (TERMs), which act as platforms for receptor clustering and signaling. Plays a role in various cellular and molecular mechanism through its association with both integrin and non-integrin proteins. These interactions facilitate critical cellular functions, including cell-to-cell communication, wound healing, platelet aggregation, trafficking, cell motility, and angiogenesis. Via interaction with JAM-A/F11R and integrin ITGA3:ITGB1, promotes the recruitment of signaling molecules such as RAC1, CDC42 and RhoGTPases to facilitate the polarization of epithelial cells and the reorganization of the actin cytoskeleton, which are critical steps in cell migration process. Regulates the glycosylation pattern of ITGA3:ITGB1 thereby modulating its activity. Plays an essential role in the maintenance of central laminin-binding integrin ITGA6:ITGB4-containing adhesion complexes. Essential for the proper assembly of the glomerular and tubular basement membranes in kidney. Contributes to T-cell activation by modulating integrin signaling leading to activation of downstream targets PTK2 and MAPK1/MAPK3. In Chlorocebus aethiops (Green monkey), this protein is CD151 antigen (CD151).